The sequence spans 281 residues: Putative phosphoenolpyruvate synthase regulatory protein (281 aa).

An ADP-binding site is contributed by 161–168 (GVSRSGKT).

Belongs to the pyruvate, phosphate/water dikinase regulatory protein family. PSRP subfamily.

The catalysed reaction is [pyruvate, water dikinase] + ADP = [pyruvate, water dikinase]-phosphate + AMP + H(+). It catalyses the reaction [pyruvate, water dikinase]-phosphate + phosphate + H(+) = [pyruvate, water dikinase] + diphosphate. In terms of biological role, bifunctional serine/threonine kinase and phosphorylase involved in the regulation of the phosphoenolpyruvate synthase (PEPS) by catalyzing its phosphorylation/dephosphorylation. The chain is Putative phosphoenolpyruvate synthase regulatory protein from Herminiimonas arsenicoxydans.